Reading from the N-terminus, the 130-residue chain is Small ribosomal subunit protein uS9 (130 aa).

Belongs to the universal ribosomal protein uS9 family.

In Cupriavidus pinatubonensis (strain JMP 134 / LMG 1197) (Cupriavidus necator (strain JMP 134)), this protein is Small ribosomal subunit protein uS9.